The sequence spans 479 residues: Cardiolipin synthase A (479 aa).

2 helical membrane-spanning segments follow: residues 8–28 (LLAY…IHAV) and 38–58 (IAWA…YLIF). 2 PLD phosphodiesterase domains span residues 218–245 (VNFR…GDEY) and 392–419 (TPGF…DNRS). Active-site residues include His-223, Lys-225, Asp-230, His-397, Lys-399, and Asp-404.

It belongs to the phospholipase D family. Cardiolipin synthase subfamily. ClsA sub-subfamily.

The protein resides in the cell inner membrane. It catalyses the reaction 2 a 1,2-diacyl-sn-glycero-3-phospho-(1'-sn-glycerol) = a cardiolipin + glycerol. Functionally, catalyzes the reversible phosphatidyl group transfer from one phosphatidylglycerol molecule to another to form cardiolipin (CL) (diphosphatidylglycerol) and glycerol. This Pseudomonas fluorescens (strain SBW25) protein is Cardiolipin synthase A.